Reading from the N-terminus, the 652-residue chain is MAPSSLLLSVGSLITSSLVSATALEARQSQTYQLAESWQGESFINDWNFFDGADPTNGYVTYVNQSFAKQSGLVKVTESGSFYMGVDYESTLNPNGAGRESVRIESKNYYTEGLYVIDIEHMPGSICGTWPAFWSVGKNWPNDGEIDIIEGVNLQKANKIVLHTSGSCDVSGSNDMTGTLSSSECGEASGTVGCVVKGTNGSSGDPFNESGGGVYAMEWTDTFIKIWFFPRSQIPASLASGNPDTSSFGTPMAHLQGSCDFAERFKAQKLIIDTTFCGDWAGNVFAESTCPMSDPSSPMQSCVNYVAQNPAAFKEAYWEINSIKIYQYGVSAASSAAVSQATASKVEGTRVSAQAANTATPTVPAPVETTTVPQPAQTNTVATSAADHATPSSAETTTVPAATGAPSVSATEGGDSELESTSTVYVTSTTTICPVAESSSAAAAGGKEDAPSNGTSGAEVAATSVAAAAPAAATSGHPGADAIANSAAATSTDAQSESATSRLTAGALSEIPTAPPEPVSQAVSTGSFDDSDTAQGDSEEQGSIASASVAPSTIPVPASSSAAALGGSSIASSFASSRLIPRPTGSSTAASATAIATWSPTAGESASGTAKESATLTTPSEVFFTPGLSNGANRMSVGLSGLIGVMFIAALA.

An N-terminal signal peptide occupies residues 1–21 (MAPSSLLLSVGSLITSSLVSA). A GH16 domain is found at 36–289 (ESWQGESFIN…WAGNVFAEST (254 aa)). The N-linked (GlcNAc...) asparagine glycan is linked to N64. The active-site Nucleophile is E145. E150 acts as the Proton donor in catalysis. N200 and N208 each carry an N-linked (GlcNAc...) asparagine glycan. Residues 379–423 (NTVATSAADHATPSSAETTTVPAATGAPSVSATEGGDSELESTST) form a disordered region. A compositionally biased stretch (polar residues) spans 390–410 (TPSSAETTTVPAATGAPSVSA). N453 is a glycosylation site (N-linked (GlcNAc...) asparagine). Residues 509–551 (SEIPTAPPEPVSQAVSTGSFDDSDTAQGDSEEQGSIASASVAP) form a disordered region. The segment covering 529 to 540 (DDSDTAQGDSEE) has biased composition (acidic residues). N630 carries GPI-anchor amidated asparagine lipidation. Positions 631–652 (GANRMSVGLSGLIGVMFIAALA) are cleaved as a propeptide — removed in mature form.

It belongs to the glycosyl hydrolase 16 family.

It is found in the cell membrane. The catalysed reaction is Endohydrolysis of (1-&gt;3)- or (1-&gt;4)-linkages in beta-D-glucans when the glucose residue whose reducing group is involved in the linkage to be hydrolyzed is itself substituted at C-3.. Its function is as follows. Mixed-linked glucanase involved in the degradation of complex natural cellulosic substrates. The chain is Probable endo-1,3(4)-beta-glucanase AFUB_029980 from Aspergillus fumigatus (strain CBS 144.89 / FGSC A1163 / CEA10) (Neosartorya fumigata).